A 514-amino-acid polypeptide reads, in one-letter code: Alstonine synthase (514 aa).

Residues 4–24 traverse the membrane as a helical segment; that stretch reads PQFSCLLPAFFLLVVFLFLLI. N-linked (GlcNAc...) asparagine glycosylation occurs at asparagine 428. Cysteine 450 contributes to the heme binding site.

This sequence belongs to the cytochrome P450 family. Requires heme as cofactor.

Its subcellular location is the membrane. The enzyme catalyses tetrahydroalstonine + A + reduced [NADPH--hemoprotein reductase] + O2 = alstonine + AH2 + oxidized [NADPH--hemoprotein reductase] + 2 H2O + H(+). The protein operates within alkaloid biosynthesis. In terms of biological role, a cytochrome P450 monooxygenase involved in the biosynthesis of pentacyclic alkaloids natural products such as alstonine, putative antipsychotic compounds. Catalyzes the conversion of tetrahydroalstonine to alstonine. No oxidative activity towards ajmalicine. This chain is Alstonine synthase, found in Alstonia scholaris (Dogbane).